Here is a 467-residue protein sequence, read N- to C-terminus: Dynactin subunit 4 (467 aa).

At alanine 2 the chain carries N-acetylalanine. Residues 152-172 (QQLAQKEKVERDRKKLARRRN) adopt a coiled-coil conformation. Serine 203 is modified (phosphoserine). Lysine 222 is covalently cross-linked (Glycyl lysine isopeptide (Lys-Gly) (interchain with G-Cter in SUMO2)). Residue threonine 414 is modified to Phosphothreonine.

This sequence belongs to the dynactin subunit 4 family. As to quaternary structure, subunit of dynactin, a multiprotein complex part of a tripartite complex with dynein and a adapter, such as BICDL1, BICD2 or HOOK3. The dynactin complex is built around ACTR1A/ACTB filament and consists of an actin-related filament composed of a shoulder domain, a pointed end and a barbed end. Its length is defined by its flexible shoulder domain. The soulder is composed of 2 DCTN1 subunits, 4 DCTN2 and 2 DCTN3. The 4 DCNT2 (via N-terminus) bind the ACTR1A filament and act as molecular rulers to determine the length. The pointed end is important for binding dynein-dynactin cargo adapters. Consists of 4 subunits: ACTR10, DCNT4, DCTN5 and DCTN6. The barbed end is composed of a CAPZA1:CAPZB heterodimers, which binds ACTR1A/ACTB filament and dynactin and stabilizes dynactin. Interacts with ATP7B, but not ATP7A, in a copper-dependent manner. Interacts with ANK2; this interaction is required for localization at costameres. Interacts with N4BP2L1.

The protein localises to the cytoplasm. Its subcellular location is the cytoskeleton. It is found in the microtubule organizing center. It localises to the centrosome. The protein resides in the stress fiber. The protein localises to the cell cortex. Its subcellular location is the myofibril. It is found in the sarcomere. In terms of biological role, part of the dynactin complex that activates the molecular motor dynein for ultra-processive transport along microtubules. In Mus musculus (Mouse), this protein is Dynactin subunit 4 (Dctn4).